The sequence spans 420 residues: Pyrin and HIN domain-containing protein 1 (420 aa).

One can recognise a Pyrin domain in the interval 1-87 (MVNEYKRIVL…ANKLKNEKAK (87 aa)). Disordered regions lie at residues 82–201 (KNEK…SSSA) and 216–236 (RLKN…GSKK). Residues 87 to 102 (KAKRTRTGKRKTAAKR) are compositionally biased toward basic residues. 2 stretches are compositionally biased toward polar residues: residues 108-118 (PSTSQPMSTTN) and 126-151 (GRST…AIQI). Positions 152–169 (SPTIASSSGQTSSRSSET) are enriched in low complexity. Residues 170–201 (LQSIIQSPKTPKRPSSSILDPPVSSGTASSSA) are compositionally biased toward polar residues. Residues 219–416 (NVPKEPSEEN…STTHSNMQVI (198 aa)) form the HIN-200 domain. Basic and acidic residues predominate over residues 220–229 (VPKEPSEENG).

It belongs to the HIN-200 family.

It localises to the nucleus. The protein is Pyrin and HIN domain-containing protein 1 of Mus musculus (Mouse).